Reading from the N-terminus, the 151-residue chain is Peptide deformylase (151 aa).

Residues Cys-88 and His-130 each contribute to the Fe cation site. The active site involves Glu-131. His-134 provides a ligand contact to Fe cation.

The protein belongs to the polypeptide deformylase family. Fe(2+) serves as cofactor.

It catalyses the reaction N-terminal N-formyl-L-methionyl-[peptide] + H2O = N-terminal L-methionyl-[peptide] + formate. Its function is as follows. Removes the formyl group from the N-terminal Met of newly synthesized proteins. Requires at least a dipeptide for an efficient rate of reaction. N-terminal L-methionine is a prerequisite for activity but the enzyme has broad specificity at other positions. The chain is Peptide deformylase from Heliobacterium modesticaldum (strain ATCC 51547 / Ice1).